The following is an 87-amino-acid chain: Small ribosomal subunit protein bS20 (87 aa).

The segment covering 1–11 (MANIKSAKKRA) has biased composition (basic residues). Residues 1–27 (MANIKSAKKRAVQSEKRRQHNASQRSM) are disordered.

The protein belongs to the bacterial ribosomal protein bS20 family.

Its function is as follows. Binds directly to 16S ribosomal RNA. This is Small ribosomal subunit protein bS20 from Haemophilus influenzae (strain PittEE).